A 321-amino-acid polypeptide reads, in one-letter code: Probable pectate lyase A (321 aa).

Residues 1–18 form the signal peptide; it reads MKFVATLIACGLSGLALA. A glycan (N-linked (GlcNAc...) asparagine) is linked at Asn-93. 3 residues coordinate Ca(2+): Asp-134, Asp-163, and Asp-167. Residue Arg-220 is part of the active site. Asn-238 is a glycosylation site (N-linked (GlcNAc...) asparagine).

Belongs to the polysaccharide lyase 1 family. Requires Ca(2+) as cofactor.

It is found in the secreted. It carries out the reaction Eliminative cleavage of (1-&gt;4)-alpha-D-galacturonan to give oligosaccharides with 4-deoxy-alpha-D-galact-4-enuronosyl groups at their non-reducing ends.. Functionally, pectinolytic enzyme consist of four classes of enzymes: pectin lyase, polygalacturonase, pectin methylesterase and rhamnogalacturonase. Among pectinolytic enzymes, pectin lyase is the most important in depolymerization of pectin, since it cleaves internal glycosidic bonds of highly methylated pectins. Favors pectate, the anion, over pectin, the methyl ester. The sequence is that of Probable pectate lyase A (plyA) from Neosartorya fischeri (strain ATCC 1020 / DSM 3700 / CBS 544.65 / FGSC A1164 / JCM 1740 / NRRL 181 / WB 181) (Aspergillus fischerianus).